Here is a 177-residue protein sequence, read N- to C-terminus: Protein GrpE (177 aa).

It belongs to the GrpE family. In terms of assembly, homodimer.

It localises to the cytoplasm. Participates actively in the response to hyperosmotic and heat shock by preventing the aggregation of stress-denatured proteins, in association with DnaK and GrpE. It is the nucleotide exchange factor for DnaK and may function as a thermosensor. Unfolded proteins bind initially to DnaJ; upon interaction with the DnaJ-bound protein, DnaK hydrolyzes its bound ATP, resulting in the formation of a stable complex. GrpE releases ADP from DnaK; ATP binding to DnaK triggers the release of the substrate protein, thus completing the reaction cycle. Several rounds of ATP-dependent interactions between DnaJ, DnaK and GrpE are required for fully efficient folding. This is Protein GrpE from Thermus thermophilus (strain ATCC BAA-163 / DSM 7039 / HB27).